The following is an 802-amino-acid chain: Ribosome-releasing factor 2, mitochondrial (802 aa).

Residues lysine 13–alanine 297 enclose the tr-type G domain. GTP is bound by residues alanine 22–threonine 29, aspartate 86–histidine 90, and asparagine 140–aspartate 143.

This sequence belongs to the TRAFAC class translation factor GTPase superfamily. Classic translation factor GTPase family. EF-G/EF-2 subfamily.

The protein resides in the mitochondrion. Its function is as follows. Mitochondrial GTPase that mediates the disassembly of ribosomes from messenger RNA at the termination of mitochondrial protein biosynthesis. Not involved in the GTP-dependent ribosomal translocation step during translation elongation. This Yarrowia lipolytica (strain CLIB 122 / E 150) (Yeast) protein is Ribosome-releasing factor 2, mitochondrial.